We begin with the raw amino-acid sequence, 25 residues long: Alpha-amylase inhibitor (25 aa).

Monomer or homodimer. In terms of processing, may exist both in a glycosylated and in an unglycosylated form.

The protein localises to the secreted. Inhibits alpha-amylases but not trypsin. Is more effective against insect alpha-amylases than those of mammals. The polypeptide is Alpha-amylase inhibitor (Secale cereale (Rye)).